The chain runs to 184 residues: Tumor necrosis factor alpha-induced protein 8-like protein 2 (184 aa).

Ser-3 carries the post-translational modification Phosphoserine.

It belongs to the TNFAIP8 family. TNFAIP8L2 subfamily. As to quaternary structure, may interact with CASP8; however, such result is unclear since could not reproduce the interaction with CASP8. Interacts with RAC1. In terms of processing, phosphorylated by TAK1/MAP3K7; this phosphorylation triggers association with BTRC and subsequent ubiquitination and degradation. Post-translationally, ubiquitinated in a BTRC-depdent manner; leading to degradation mediated through the proteasome pathway. As to expression, expressed in thymus, spleen, lymph node and small intestine, but not in liver, heart, muscle, testis, spinal cord or brain. Up-regulated in the spinal cord of mice with experimental autoimmune encephalomyelitis. Constitutively expressed by macrophages, B and T-lymphocytes at various developmental stages.

Its subcellular location is the cytoplasm. The protein localises to the nucleus. It localises to the lysosome. Its function is as follows. Acts as a negative regulator of innate and adaptive immunity by maintaining immune homeostasis. Plays a regulatory role in the Toll-like signaling pathway by determining the strength of LPS-induced signaling and gene expression. Inhibits TCR-mediated T-cell activation and negatively regulate T-cell function to prevent hyperresponsiveness. Also inhibits autolysosome formation via negatively modulating MTOR activation by interacting with RAC1 and promoting the disassociation of the RAC1-MTOR complex. Plays an essential role in NK-cell biology by acting as a checkpoint and displaying an expression pattern correlating with NK-cell maturation process and by negatively regulating NK-cell maturation and antitumor immunity. Mechanistically, suppresses IL-15-triggered mTOR activity in NK-cells. The chain is Tumor necrosis factor alpha-induced protein 8-like protein 2 (Tnfaip8l2) from Mus musculus (Mouse).